The chain runs to 201 residues: Ribonuclease HII (201 aa).

The region spanning 12-201 is the RNase H type-2 domain; sequence GIVCGIDEVG…FAPVAQYMLF (190 aa). 3 residues coordinate a divalent metal cation: Asp-18, Glu-19, and Asp-113.

This sequence belongs to the RNase HII family. Requires Mn(2+) as cofactor. The cofactor is Mg(2+).

Its subcellular location is the cytoplasm. The enzyme catalyses Endonucleolytic cleavage to 5'-phosphomonoester.. Its function is as follows. Endonuclease that specifically degrades the RNA of RNA-DNA hybrids. The sequence is that of Ribonuclease HII (rnhB) from Paramagnetospirillum magneticum (strain ATCC 700264 / AMB-1) (Magnetospirillum magneticum).